Consider the following 176-residue polypeptide: Large ribosomal subunit protein uL6 (176 aa).

It belongs to the universal ribosomal protein uL6 family. In terms of assembly, part of the 50S ribosomal subunit.

Its function is as follows. This protein binds to the 23S rRNA, and is important in its secondary structure. It is located near the subunit interface in the base of the L7/L12 stalk, and near the tRNA binding site of the peptidyltransferase center. The chain is Large ribosomal subunit protein uL6 from Burkholderia thailandensis (strain ATCC 700388 / DSM 13276 / CCUG 48851 / CIP 106301 / E264).